We begin with the raw amino-acid sequence, 175 residues long: 19.0 kDa class II heat shock protein (175 aa).

The sHSP domain occupies 42–165; sequence DRRAMANTPM…KPRVVEVKVA (124 aa). The tract at residues 145–175 is disordered; that stretch reads TVDKKPPPEPKKPRVVEVKVAGAGEPKGKGK. Basic and acidic residues predominate over residues 146-161; that stretch reads VDKKPPPEPKKPRVVE.

It belongs to the small heat shock protein (HSP20) family. As to quaternary structure, may form oligomeric structures.

It is found in the cytoplasm. The polypeptide is 19.0 kDa class II heat shock protein (HSP19.0) (Oryza sativa subsp. japonica (Rice)).